We begin with the raw amino-acid sequence, 469 residues long: Phenylalanine--tRNA ligase, mitochondrial (469 aa).

The N-terminal 17 residues, 1 to 17 (MFLNRMMKTRTGLYRLY), are a transit peptide targeting the mitochondrion. Residues 126-129 (SAHE), Arg155, 162-164 (THY), 169-171 (QME), Glu302, and Phe329 contribute to the substrate site. The 98-residue stretch at 372 to 469 (SKHPGSFRDV…LVKEYSVELR (98 aa)) folds into the FDX-ACB domain.

Belongs to the class-II aminoacyl-tRNA synthetase family. As to quaternary structure, monomer.

It is found in the mitochondrion matrix. The enzyme catalyses tRNA(Phe) + L-phenylalanine + ATP = L-phenylalanyl-tRNA(Phe) + AMP + diphosphate + H(+). In terms of biological role, is responsible for the charging of tRNA(Phe) with phenylalanine in mitochondrial translation. This is Phenylalanine--tRNA ligase, mitochondrial (MSF1) from Saccharomyces cerevisiae (strain ATCC 204508 / S288c) (Baker's yeast).